The primary structure comprises 462 residues: 7-hydroxymethyl chlorophyll a reductase, chloroplastic (462 aa).

Residues 1 to 20 (MITVVTSRLSLLPPVFSVVN) constitute a chloroplast transit peptide.

The protein belongs to the FrhB family. As to quaternary structure, interacts with SGR1, the chlorophyll catabolic enzymes (CCEs) NYC1, NOL and RCCR, and the LHCII complex. Part of a SGR1-CCE-LHCII complex, which acts in chlorophyll breakdown. FAD is required as a cofactor. The cofactor is iron-sulfur cluster.

The protein localises to the plastid. It localises to the chloroplast. The enzyme catalyses chlorophyll a + 2 oxidized [2Fe-2S]-[ferredoxin] + H2O = 7(1)-hydroxychlorophyll a + 2 reduced [2Fe-2S]-[ferredoxin] + 2 H(+). Its function is as follows. Probable iron-sulfur flavoprotein that converts 7-hydroxymethyl chlorophyll a to chlorophyll a using ferredoxin as a reducing equivalent. Catalyzes the reduction of a hydroxymethyl group to a methyl group. Belongs to the chlorophyll catabolic enzymes (CCEs). This Arabidopsis thaliana (Mouse-ear cress) protein is 7-hydroxymethyl chlorophyll a reductase, chloroplastic (HCAR).